The primary structure comprises 695 residues: MDLHSLLELGTKPTAPHVRNKKVILFDTNHQVSICNQIIDAINSGIDLGDLLEGGLLTLCVEHYYNSDKDKFNTSPIAKYLRDAGYEFDVIKNPDATRFLEVIPNEPHYSPLILALKTLESTESQRGRIGLFLSFCSLFLPKLVVGDRASIEKALRQVTVHQEQGIVTYPNHWLTTGHMKVIFGILRSSFILKFVLIHQGVNLVTGHDAYDSIISNSVGQTRFSGLLIVKTVLEFILQKTDSGVALHPLVRTSKVKNEVASFKQALSNLARHGEYAPFARVLNLSGINNLEHGLYPQLSAIALGVATAHGSTLAGVNVGEQYQQLREAAHDAEVKLQRRHEHQEIQAIAEDDEERKILEQFHLQKTEITHSQTLAVLSQKREKLARLAAEIENNIAEDQGFKQSQNQVSQSFLNDPTPVEVTVQARSINRPTALPPPVDNKIEHETEEDSSSSSSFVDLNDPFALLNEDEDTLENSVMAPSTTLREPKEVSEPLRQTQDLDISQKKQGNESTDPARKQFLRYQELPPVQEDDESEYTTDSQESDDQPGSDNEQGVDLPPPPLYAQEKRQDPIQHPAVSSQDPFGSIGDVDGDILEPIRSPSSPSAPQEDTRMGEAYELSPDFTSYEDNQQNWPQRVVTKKGRTFLYPNDLLQTSPPESLITALVEEYQNPVSAKELQADWPDMSFDERRHVAMNL.

Coiled-coil stretches lie at residues 316-341 (VNVG…RRHE) and 372-400 (QTLA…EDQG). 2 disordered regions span residues 426-458 (RSIN…SFVD) and 472-611 (TLEN…EDTR). A compositionally biased stretch (polar residues) spans 474–484 (ENSVMAPSTTL). Basic and acidic residues predominate over residues 502 to 516 (ISQKKQGNESTDPAR). Residues 529–547 (QEDDESEYTTDSQESDDQP) are compositionally biased toward acidic residues. A PTAP/PSAP motif motif is present at residues 603-606 (PSAP).

It belongs to the filoviruses nucleoprotein family. As to quaternary structure, homooligomer. Homomultimerizes to form the nucleocapsid. Binds to viral genomic RNA. Interacts with VP35 and VP30 to form the nucleocapsid. Also interacts with VP24 and VP40. In terms of processing, phosphorylated.

The protein localises to the virion. It localises to the host cytoplasm. Its function is as follows. Encapsidates the genome, protecting it from nucleases. The encapsidated genomic RNA is termed the nucleocapsid and serves as template for transcription and replication. During replication, encapsidation by NP is coupled to RNA synthesis and all replicative products are resistant to nucleases. The polypeptide is Nucleoprotein (NP) (Lake Victoria marburgvirus (strain Ravn-87) (MARV)).